Here is a 613-residue protein sequence, read N- to C-terminus: Portal protein (613 aa).

A disordered region spans residues 577 to 613; the sequence is ATGGDHGIRQAPSARGDAEPDHAKSKPARDPPPGAGS. The segment covering 592–605 has biased composition (basic and acidic residues); sequence GDAEPDHAKSKPAR.

It belongs to the herpesviridae portal protein family. Homododecamerizes. Interacts with terminase subunits TRM1 and TRM3.

It localises to the virion. It is found in the host nucleus. Forms a portal in the viral capsid through which viral DNA is translocated during DNA packaging. Assembles as a dodecamer at a single fivefold axe of the T=16 icosahedric capsid. Binds to the molecular motor that translocates the viral DNA, termed terminase. In Homo sapiens (Human), this protein is Portal protein.